Here is a 380-residue protein sequence, read N- to C-terminus: MDFEQLKQDVIAYSKTIGIDKIGFASASPFEELKQRLIQQQQLNYQSGFEEPDIEKRTNPQLLLSGAKSIIAIALAYPSKLKNAPLSKRGERRGIFCRASWGQDYHLVLRDRLQKLEAYLIEKLPDIEVKSMVDTGELSDRAVSERAGIGWSGKNCSIITPEFGSYVYLGEMITNVPFPPDQPIEDQCGSCTKCIDICPTGALIQGGQLDSKKCIAFLTQTKGFLPEEYRDKIGNRIYGCDTCQTVCPKNKGMDFHNHPEMEPDPELVKPLLTPLLTISNRDFKEKYGIMSGSWRGKKPLQRNAILALAHFKEASAIPDLIGVMKDDPRPVLRGTAAWALGKIGGDGVGEAIEKAMQREKDEEVLHEMNRGLELLAQKKE.

The Proton donor role is filled by Asp134. A 4Fe-4S ferredoxin-type 1 domain is found at 179–208 (PPDQPIEDQCGSCTKCIDICPTGALIQGGQ). [4Fe-4S] cluster contacts are provided by Cys188, Cys191, Cys194, Cys198, Cys214, Cys240, Cys243, and Cys247. One can recognise a 4Fe-4S ferredoxin-type 2 domain in the interval 226–258 (PEEYRDKIGNRIYGCDTCQTVCPKNKGMDFHNH).

The protein belongs to the QueG family. In terms of assembly, monomer. Requires cob(II)alamin as cofactor. [4Fe-4S] cluster serves as cofactor.

Its subcellular location is the cytoplasm. It catalyses the reaction epoxyqueuosine(34) in tRNA + AH2 = queuosine(34) in tRNA + A + H2O. The protein operates within tRNA modification; tRNA-queuosine biosynthesis. Functionally, catalyzes the conversion of epoxyqueuosine (oQ) to queuosine (Q), which is a hypermodified base found in the wobble positions of tRNA(Asp), tRNA(Asn), tRNA(His) and tRNA(Tyr). The sequence is that of Epoxyqueuosine reductase from Bacillus anthracis.